Consider the following 438-residue polypeptide: Dolichyl-diphosphooligosaccharide--protein glycosyltransferase 48 kDa subunit (438 aa).

The signal sequence occupies residues 1-25; that stretch reads MASLRLSVLLVSVSWLLLLVSGLRA. At 26-408 the chain is on the lumenal side; it reads GPRTLVLMEN…QYERFIPSAY (383 aa). The helical transmembrane segment at 409–429 threads the bilayer; sequence PYYASAFSVMFGLFIFSIVFL. Residues 430-438 are Cytoplasmic-facing; it reads HMKEKEKSD.

Belongs to the DDOST 48 kDa subunit family. Component of the oligosaccharyltransferase (OST) complex.

It is found in the endoplasmic reticulum membrane. The protein operates within protein modification; protein glycosylation. Functionally, subunit of the oligosaccharyl transferase (OST) complex that catalyzes the initial transfer of a defined glycan (Glc(3)Man(9)GlcNAc(2) in eukaryotes) from the lipid carrier dolichol-pyrophosphate to an asparagine residue within an Asn-X-Ser/Thr consensus motif in nascent polypeptide chains, the first step in protein N-glycosylation. N-glycosylation occurs cotranslationally and the complex associates with the Sec61 complex at the channel-forming translocon complex that mediates protein translocation across the endoplasmic reticulum (ER). All subunits are required for a maximal enzyme activity. Required for the assembly of both SST3A- and SS3B-containing OST complexes. The protein is Dolichyl-diphosphooligosaccharide--protein glycosyltransferase 48 kDa subunit of Xenopus laevis (African clawed frog).